The following is an 88-amino-acid chain: Alkene monooxygenase system, oxygenase component subunit gamma (88 aa).

This sequence belongs to the TmoB/XamoB family. As to quaternary structure, the alkene monooxygenase multicomponent enzyme system is composed of an electron transfer component and a monooxygenase component interacting with the effector protein XamoD. The electron transfer component is composed of a ferredoxin reductase (XamoF) and a ferredoxin (XamoC), and the monooxygenase component is formed by a heterohexamer (dimer of heterotrimers) of two alpha subunits (XamoA), two beta subunits (XamoE) and two gamma subunits (XamoB).

The protein localises to the cytoplasm. The enzyme catalyses propene + NADH + O2 + H(+) = 1,2-epoxypropane + NAD(+) + H2O. With respect to regulation, inhibited by propyne. Its function is as follows. Component of the alkene monooxygenase multicomponent enzyme system which catalyzes the O2- and NADH-dependent epoxidation of short chain (C2 to C6) alkenes to their corresponding epoxides. Also able to catalyze the oxidation of a number of chlorinated alkenes, including trichloroethylene, cis- and trans-1,2-dichloroethylene, vinyl chloride, 1-chloropropylene, 1,3-dichloropropylene and 2,3-dichloropropylene. The polypeptide is Alkene monooxygenase system, oxygenase component subunit gamma (Xanthobacter autotrophicus (strain ATCC BAA-1158 / Py2)).